We begin with the raw amino-acid sequence, 184 residues long: Probable chemoreceptor glutamine deamidase CheD (184 aa).

This sequence belongs to the CheD family.

It carries out the reaction L-glutaminyl-[protein] + H2O = L-glutamyl-[protein] + NH4(+). Its function is as follows. Probably deamidates glutamine residues to glutamate on methyl-accepting chemotaxis receptors (MCPs), playing an important role in chemotaxis. The chain is Probable chemoreceptor glutamine deamidase CheD from Rhizobium etli (strain CIAT 652).